The sequence spans 236 residues: Small ribosomal subunit protein uS10m (236 aa).

The transit peptide at 1–24 directs the protein to the mitochondrion; the sequence is MMRQSIRPLRAFSSEVSWIARRTQ. A disordered region spans residues 29-49; it reads KPGDLVPNKPEPSKNEQEPRF. Residues 39-49 show a composition bias toward basic and acidic residues; that stretch reads EPSKNEQEPRF.

The protein belongs to the universal ribosomal protein uS10 family. In terms of assembly, part of the mitochondrial small ribosomal subunit.

It localises to the mitochondrion. Its function is as follows. Involved in mitochondrial genome encoded proteins translation. Involved in the binding of tRNA to the ribosomes. This is Small ribosomal subunit protein uS10m (RSM10) from Gibberella zeae (strain ATCC MYA-4620 / CBS 123657 / FGSC 9075 / NRRL 31084 / PH-1) (Wheat head blight fungus).